The chain runs to 476 residues: Adenosylhomocysteinase (476 aa).

Residues threonine 62, aspartate 141, and glutamate 201 each contribute to the substrate site. 202 to 204 serves as a coordination point for NAD(+); it reads TTT. Substrate-binding residues include lysine 231 and aspartate 235. NAD(+)-binding positions include asparagine 236, 265–270, glutamate 288, asparagine 323, 344–346, and asparagine 389; these read GYGDVG and IGH.

It belongs to the adenosylhomocysteinase family. It depends on NAD(+) as a cofactor.

The protein localises to the cytoplasm. The catalysed reaction is S-adenosyl-L-homocysteine + H2O = L-homocysteine + adenosine. The protein operates within amino-acid biosynthesis; L-homocysteine biosynthesis; L-homocysteine from S-adenosyl-L-homocysteine: step 1/1. In terms of biological role, may play a key role in the regulation of the intracellular concentration of adenosylhomocysteine. The protein is Adenosylhomocysteinase of Delftia acidovorans (strain DSM 14801 / SPH-1).